Consider the following 395-residue polypeptide: MPNFVATSLKNLKFPFGADGVEFLWSAKAGDESLIYTKTGKKEFFLLVKDKKTEFVVKSDKLTRPASLGTIQKALSVYKDLNVLDLKSSTIAIKNEKQLAKKEFILNDIQFLEKLKSGEFKKIFVEIGFGSGRHLLYQAKTDENTLVVGIEVYKRSCEQVNNLALSMGLKNVILLNLDARLVMSLLHSNSVDRLFLHFPVPWEKSEKRRVVSAEFANECQRVLKSGGSFELRSDDKNYTDFTISCFLNLKEAKMEIYKNRFLDVSSKYEDRWIKQNRDIYDVVFTNLIVSEQKVLHGDFEFGTVLEEDILSKFENKTIKKDDYFIHMERIYKKDSSEKNGGLLLRVAFGSFYRPEHCFILVENSKASYFIKKPLLTYENLKAHSTLKEYLSCSTS.

Residues Glu-126, Glu-151, and Asp-178 each contribute to the S-adenosyl-L-methionine site. 2 residues coordinate substrate: Lys-204 and Asp-234.

This sequence belongs to the class I-like SAM-binding methyltransferase superfamily. TrmB family.

The catalysed reaction is guanosine(46) in tRNA + S-adenosyl-L-methionine = N(7)-methylguanosine(46) in tRNA + S-adenosyl-L-homocysteine. It functions in the pathway tRNA modification; N(7)-methylguanine-tRNA biosynthesis. In terms of biological role, catalyzes the formation of N(7)-methylguanine at position 46 (m7G46) in tRNA. In Campylobacter fetus subsp. fetus (strain 82-40), this protein is tRNA (guanine-N(7)-)-methyltransferase.